The following is a 1243-amino-acid chain: Zinc finger protein ZFAT (1243 aa).

The C2H2-type 1 zinc-finger motif lies at 12–35 (FMCKCCNLFSPNQSELLSHVSEKH). Disordered stretches follow at residues 51 to 116 (PLST…PSSL) and 147 to 189 (GEAG…GKEA). The span at 70 to 81 (MKRKRGRPKGST) shows a compositional bias: basic residues. A C2H2-type 2; degenerate zinc finger spans residues 116–141 (LECSKCCRKFSNTRQLRKHICIIVLN). The span at 156 to 189 (ELEKKCKEDDREKASKRPRSQKTEKVQKISGKEA) shows a compositional bias: basic and acidic residues. C2H2-type zinc fingers lie at residues 271-293 (FTCE…LRIH), 299-321 (YKCP…LRKH), 326-349 (FACD…ERVH), 354-377 (QHCR…RDAH), 404-426 (YDCH…MLVH), 432-454 (FACE…VRKH), and 458-481 (YVCA…KEVH). Zn(2+) is bound by residues Cys273, Cys276, His289, His293, Cys301, Cys304, His317, His321, Cys328, Cys331, His344, His349, Cys356, Cys359, His372, His377, Cys406, Cys409, His422, and His426. Zn(2+)-binding residues include Cys460, Cys463, His476, and His481. 3 disordered regions span residues 534 to 570 (EACP…AEST), 603 to 625 (TSSA…SSVQ), and 638 to 705 (AQSA…CKAA). The segment covering 610 to 620 (AAPEKPPDMQH) has biased composition (basic and acidic residues). A compositionally biased stretch (polar residues) spans 638–650 (AQSAGSDQESHGA). C2H2-type zinc fingers lie at residues 742 to 764 (LECE…VRTH), 770 to 793 (YYCS…IQKH), 798 to 822 (LKCP…LKVH), 830 to 853 (YSCP…KTNH), 880 to 903 (MKCP…IWAH), 909 to 931 (FKCS…MNRH), 937 to 959 (HLCD…KLLH), 966 to 988 (FKCT…MEQH), 994 to 1017 (FRCA…NRKH), and 1041 to 1064 (LKCP…KNKH). Cys772, Cys775, His788, His793, Cys800, Cys805, His818, His822, Cys832, Cys835, His848, His853, Cys882, Cys885, His899, His903, Cys911, Cys914, His927, His931, Cys939, Cys942, His955, and Leu958 together coordinate Zn(2+).

Isoform 1 is strongly expressed in placenta, spleen, kidney, testis and peripheral blood leukocytes. Expressed in CD4+ and CD8+ T-cells, CD19+ B-cells and CB14+ monocytes. Isoform 3 is strongly expressed in placenta, ovary, tonsil, CD19+ B-cells and CD14+ monocytes.

The protein resides in the nucleus. Its subcellular location is the cytoplasm. It is found in the cytosol. In terms of biological role, may be involved in transcriptional regulation. Overexpression causes down-regulation of a number of genes involved in the immune response. Some genes are also up-regulated. The protein is Zinc finger protein ZFAT (ZFAT) of Homo sapiens (Human).